The chain runs to 3387 residues: Genome polyprotein (3387 aa).

The Cytoplasmic portion of the chain corresponds to 1–100; the sequence is MNQRKKVVRP…LNILNGRKRS (100 aa). The hydrophobic; homodimerization of capsid protein C stretch occupies residues 36-71; the sequence is LFSGKGPLRMVLAFITFLRVLSIPPTAGILKRWGQL. The propeptide at 100–113 is ER anchor for the capsid protein C, removed in mature form by serine protease NS3; sequence STMTLLCLIPTAMA. The helical transmembrane segment at 101-117 threads the bilayer; it reads TMTLLCLIPTAMAFHLS. Residues 118-237 are Extracellular-facing; sequence TRDGEPLMIV…GAWKHAQRVE (120 aa). Asn-182 is a glycosylation site (N-linked (GlcNAc...) asparagine; by host). The chain crosses the membrane as a helical span at residues 238–258; that stretch reads SWILRNPGFALLAGFMAYMIG. Residues 259 to 265 lie on the Cytoplasmic side of the membrane; sequence QTGIQRT. The helical transmembrane segment at 266–279 threads the bilayer; it reads VFFVLMMLVAPSYG. Residues 280–723 lie on the Extracellular side of the membrane; the sequence is MRCVGVGNRD…AVHQVFGSVY (444 aa). Cystine bridges form between Cys-282–Cys-309, Cys-339–Cys-400, Cys-353–Cys-384, Cys-371–Cys-395, Cys-464–Cys-564, and Cys-581–Cys-612. Asn-346 carries N-linked (GlcNAc...) asparagine; by host glycosylation. Residues 377–390 form a fusion peptide region; that stretch reads DRGWGNGCGLFGKG. The helical transmembrane segment at 724–746 threads the bilayer; that stretch reads TTMFGGVSWMVRILIGFLVLWIG. The Cytoplasmic segment spans residues 747-750; that stretch reads TNSR. Residues 751-771 form a helical membrane-spanning segment; sequence NTSMAMTCIAVGGITLFLGFT. Residues 772–1194 are Extracellular-facing; that stretch reads VHADTGCAVS…MLGDTMSGRM (423 aa). Intrachain disulfides connect Cys-778/Cys-789, Cys-829/Cys-917, Cys-953/Cys-997, Cys-1054/Cys-1103, Cys-1065/Cys-1087, and Cys-1086/Cys-1090. N-linked (GlcNAc...) asparagine; by host glycans are attached at residues Asn-904 and Asn-981. Residues 1195-1218 form a helical membrane-spanning segment; sequence GGQIHLAIMAVFKMSPGYVLGIFL. The Lumenal segment spans residues 1219–1224; the sequence is RKLTSR. A helical transmembrane segment spans residues 1225–1243; it reads ETALMVIGMAMTTVLSIPH. Residues 1244–1267 are Cytoplasmic-facing; it reads DLMEFIDGISLGLILLKMVTHFDN. Residues 1268–1288 traverse the membrane as a helical segment; it reads TQVGTLALSLTFIRSTMPLVM. Ala-1289 is a topological domain (lumenal). The chain crosses the membrane as a helical span at residues 1290–1308; it reads WRTIMAVLFVVTLIPLCRT. Topologically, residues 1309–1316 are lumenal; it reads SCLQKQSH. Residues 1317–1337 form a helical membrane-spanning segment; the sequence is WVEITALILGAQALPVYLMTL. Over 1338–1345 the chain is Cytoplasmic; sequence MKGASKRS. Residues 1346–1366 form a helical membrane-spanning segment; sequence WPLNEGIMAVGLVSLLGSALL. Residues 1367-1369 are Lumenal-facing; it reads KND. Residues 1370–1390 form a helical membrane-spanning segment; it reads VPLAGPMVAGGLLLAAYVMSG. Over 1391 to 1437 the chain is Cytoplasmic; it reads SSADLSLEKAANVQWDEMADITGSSPIIEVKQDEDGSFSIRDIEETN. The tract at residues 1397–1436 is interacts with and activates NS3 protease; the sequence is LEKAANVQWDEMADITGSSPIIEVKQDEDGSFSIRDIEET. The segment at residues 1438-1458 is an intramembrane region (helical); sequence MITLLVKLALITVSGLYPLAI. The Cytoplasmic segment spans residues 1459–2146; the sequence is PVTMTLWYMW…LNELPESLET (688 aa). The region spanning 1475–1652 is the Peptidase S7 domain; it reads SGALWDVPSP…ERTGEPDYEV (178 aa). Catalysis depends on charge relay system; for serine protease NS3 activity residues His-1525, Asp-1549, and Ser-1609. One can recognise a Helicase ATP-binding domain in the interval 1654–1810; that stretch reads EDIFRKKRLT…QSNSPIEDIE (157 aa). Residues 1658 to 1661 are important for RNA-binding; it reads RKKR. Residue 1667-1674 coordinates ATP; that stretch reads LHPGAGKT. The DEAH box motif lies at 1758–1761; that stretch reads DEAH. Residues 1820–1987 form the Helicase C-terminal domain; that stretch reads TGFDWITDYQ…IIPTLFGPER (168 aa). Lys-1862 carries the N6-acetyllysine; by host modification. Residues 2147–2167 form a helical membrane-spanning segment; it reads LMLVALLGAMTAGIFLFFMQG. Residues 2168–2169 are Lumenal-facing; it reads KG. The helical intramembrane region spans 2170–2190; the sequence is IGKLSMGLIAIAVASGLLWVA. A topological domain (lumenal) is located at residue Glu-2191. Residues 2192–2212 traverse the membrane as a helical segment; that stretch reads IQPQWIAASIILEFFLMVLLI. Over 2213-2225 the chain is Cytoplasmic; that stretch reads PEPEKQRTPQDNQ. Residues 2226-2246 form a helical membrane-spanning segment; sequence LIYVILTILTIIGLIAANEMG. Topologically, residues 2247–2270 are lumenal; it reads LIEKTKTDFGFYQVKTETTILDVD. The segment at residues 2271-2291 is an intramembrane region (helical); the sequence is LRPASAWTLYAVATTILTPML. The Lumenal segment spans residues 2292-2301; sequence RHTIENTSAN. Residues Asn-2297 and Asn-2301 are each glycosylated (N-linked (GlcNAc...) asparagine; by host). An intramembrane region (helical) is located at residues 2302-2322; that stretch reads LSLAAIANQAAVLMGLGKGWP. At 2323 to 2343 the chain is on the lumenal side; the sequence is LHRMDLGVPLLAMGCYSQVNP. A helical membrane pass occupies residues 2344-2364; the sequence is TTLIASLVMLLVHYAIIGPGL. Residues 2365-2409 are Cytoplasmic-facing; that stretch reads QAKATREAQKRTAAGIMKNPTVDGITVIDLEPISYDPKFEKQLGQ. The chain crosses the membrane as a helical span at residues 2410–2430; it reads VMLLVLCAGQLLLMRTTWAFC. Topologically, residues 2431-2455 are lumenal; that stretch reads EVLTLATGPVLTLWEGNPGRFWNTT. Asn-2453 carries an N-linked (GlcNAc...) asparagine; by host glycan. The chain crosses the membrane as a helical span at residues 2456 to 2476; that stretch reads IAVSTANIFRGSYLAGAGLAF. Residues 2477-3387 lie on the Cytoplasmic side of the membrane; sequence SLIKNAQTPR…SAPFESEGVL (911 aa). Residues 2489–2751 enclose the mRNA cap 0-1 NS5-type MT domain; that stretch reads TGTTGETLGE…DVDLGAGTRS (263 aa). Residue Ser-2543 coordinates S-adenosyl-L-methionine. Residue Ser-2543 is modified to Phosphoserine. Lys-2548 (for 2'-O-MTase activity) is an active-site residue. An SUMO-interacting motif motif is present at residues 2564–2567; sequence VVDL. S-adenosyl-L-methionine contacts are provided by Gly-2573, Trp-2574, Thr-2591, Lys-2592, Asp-2618, and Val-2619. Asp-2633 functions as the For 2'-O-MTase activity in the catalytic mechanism. Ile-2634 contributes to the S-adenosyl-L-methionine binding site. Residues Lys-2668 and Glu-2704 each act as for 2'-O-MTase activity in the active site. Tyr-2706 serves as a coordination point for S-adenosyl-L-methionine. 4 residues coordinate Zn(2+): Glu-2925, His-2929, Cys-2934, and Cys-2937. In terms of domain architecture, RdRp catalytic spans 3016 to 3166; sequence LIYADDTAGW…PLDERFSTSL (151 aa). The Zn(2+) site is built by His-3200, Cys-3216, and Cys-3335.

In the N-terminal section; belongs to the class I-like SAM-binding methyltransferase superfamily. mRNA cap 0-1 NS5-type methyltransferase family. Homodimer. Interacts (via N-terminus) with host EXOC1 (via C-terminus); this interaction results in EXOC1 degradation through the proteasome degradation pathway. In terms of assembly, forms heterodimers with envelope protein E in the endoplasmic reticulum and Golgi. As to quaternary structure, homodimer; in the endoplasmic reticulum and Golgi. Interacts with protein prM. Interacts with non-structural protein 1. Homodimer; Homohexamer when secreted. Interacts with envelope protein E. In terms of assembly, interacts (via N-terminus) with serine protease NS3. As to quaternary structure, forms a heterodimer with serine protease NS3. May form homooligomers. Forms a heterodimer with NS2B. Interacts with NS4B. Interacts with unphosphorylated RNA-directed RNA polymerase NS5; this interaction stimulates RNA-directed RNA polymerase NS5 guanylyltransferase activity. In terms of assembly, interacts with host MAVS; this interaction inhibits the synthesis of IFN-beta. Interacts with host AUP1; the interaction occurs in the presence of Dengue virus NS4B and induces lipophagy which facilitates production of virus progeny particles. As to quaternary structure, interacts with serine protease NS3. Homodimer. Interacts with host STAT2; this interaction inhibits the phosphorylation of the latter, and, when all viral proteins are present (polyprotein), targets STAT2 for degradation. Interacts with serine protease NS3. Interacts with host PAF1 complex; the interaction may prevent the recruitment of the PAF1 complex to interferon-responsive genes, and thus reduces the immune response. In terms of processing, specific enzymatic cleavages in vivo yield mature proteins. Cleavages in the lumen of endoplasmic reticulum are performed by host signal peptidase, whereas cleavages in the cytoplasmic side are performed by serine protease NS3. Signal cleavage at the 2K-4B site requires a prior NS3 protease-mediated cleavage at the 4A-2K site. Post-translationally, cleaved in post-Golgi vesicles by a host furin, releasing the mature small envelope protein M, and peptide pr. This cleavage is incomplete as up to 30% of viral particles still carry uncleaved prM. N-glycosylated. In terms of processing, N-glycosylated. The excreted form is glycosylated and this is required for efficient secretion of the protein from infected cells. Post-translationally, acetylated by host KAT5. Acetylation modulates NS3 RNA-binding and unwinding activities and plays an important positive role for viral replication. Sumoylation of RNA-directed RNA polymerase NS5 increases NS5 protein stability allowing proper viral RNA replication. In terms of processing, phosphorylated on serines residues. This phosphorylation may trigger NS5 nuclear localization.

Its subcellular location is the virion. The protein localises to the host nucleus. It localises to the host cytoplasm. It is found in the host perinuclear region. The protein resides in the secreted. Its subcellular location is the virion membrane. The protein localises to the host endoplasmic reticulum membrane. It localises to the host mitochondrion. The enzyme catalyses Selective hydrolysis of -Xaa-Xaa-|-Yaa- bonds in which each of the Xaa can be either Arg or Lys and Yaa can be either Ser or Ala.. The catalysed reaction is RNA(n) + a ribonucleoside 5'-triphosphate = RNA(n+1) + diphosphate. It catalyses the reaction a ribonucleoside 5'-triphosphate + H2O = a ribonucleoside 5'-diphosphate + phosphate + H(+). It carries out the reaction ATP + H2O = ADP + phosphate + H(+). The enzyme catalyses a 5'-end (5'-triphosphoguanosine)-ribonucleoside in mRNA + S-adenosyl-L-methionine = a 5'-end (N(7)-methyl 5'-triphosphoguanosine)-ribonucleoside in mRNA + S-adenosyl-L-homocysteine. The catalysed reaction is a 5'-end (N(7)-methyl 5'-triphosphoguanosine)-ribonucleoside in mRNA + S-adenosyl-L-methionine = a 5'-end (N(7)-methyl 5'-triphosphoguanosine)-(2'-O-methyl-ribonucleoside) in mRNA + S-adenosyl-L-homocysteine + H(+). Its function is as follows. Plays a role in virus budding by binding to the cell membrane and gathering the viral RNA into a nucleocapsid that forms the core of a mature virus particle. During virus entry, may induce genome penetration into the host cytoplasm after hemifusion induced by the surface proteins. Can migrate to the cell nucleus where it modulates host functions. Overcomes the anti-viral effects of host EXOC1 by sequestering and degrading the latter through the proteasome degradation pathway. Functionally, inhibits RNA silencing by interfering with host Dicer. Prevents premature fusion activity of envelope proteins in trans-Golgi by binding to envelope protein E at pH6.0. After virion release in extracellular space, gets dissociated from E dimers. In terms of biological role, acts as a chaperone for envelope protein E during intracellular virion assembly by masking and inactivating envelope protein E fusion peptide. prM is the only viral peptide matured by host furin in the trans-Golgi network probably to avoid catastrophic activation of the viral fusion activity in acidic Golgi compartment prior to virion release. prM-E cleavage is inefficient, and many virions are only partially matured. These uncleaved prM would play a role in immune evasion. Its function is as follows. May play a role in virus budding. Exerts cytotoxic effects by activating a mitochondrial apoptotic pathway through M ectodomain. May display a viroporin activity. Functionally, binds to host cell surface receptor and mediates fusion between viral and cellular membranes. Envelope protein is synthesized in the endoplasmic reticulum in the form of heterodimer with protein prM. They play a role in virion budding in the ER, and the newly formed immature particle is covered with 60 spikes composed of heterodimer between precursor prM and envelope protein E. The virion is transported to the Golgi apparatus where the low pH causes dissociation of PrM-E heterodimers and formation of E homodimers. prM-E cleavage is inefficient, and many virions are only partially matured. These uncleaved prM would play a role in immune evasion. Involved in immune evasion, pathogenesis and viral replication. Once cleaved off the polyprotein, is targeted to three destinations: the viral replication cycle, the plasma membrane and the extracellular compartment. Essential for viral replication. Required for formation of the replication complex and recruitment of other non-structural proteins to the ER-derived membrane structures. Excreted as a hexameric lipoparticle that plays a role against host immune response. Antagonizing the complement function. Binds to the host macrophages and dendritic cells. Inhibits signal transduction originating from Toll-like receptor 3 (TLR3). In terms of biological role, disrupts the host endothelial glycocalyx layer of host pulmonary microvascular endothelial cells, inducing degradation of sialic acid and shedding of heparan sulfate proteoglycans. NS1 induces expression of sialidases, heparanase, and activates cathepsin L, which activates heparanase via enzymatic cleavage. These effects are probably linked to the endothelial hyperpermeability observed in severe dengue disease. Its function is as follows. Component of the viral RNA replication complex that functions in virion assembly and antagonizes the host immune response. Functionally, required cofactor for the serine protease function of NS3. May have membrane-destabilizing activity and form viroporins. Displays three enzymatic activities: serine protease, NTPase and RNA helicase. NS3 serine protease, in association with NS2B, performs its autocleavage and cleaves the polyprotein at dibasic sites in the cytoplasm: C-prM, NS2A-NS2B, NS2B-NS3, NS3-NS4A, NS4A-2K and NS4B-NS5. NS3 RNA helicase binds RNA and unwinds dsRNA in the 3' to 5' direction. In terms of biological role, regulates the ATPase activity of the NS3 helicase activity. NS4A allows NS3 helicase to conserve energy during unwinding. Plays a role in the inhibition of the host innate immune response. Interacts with host MAVS and thereby prevents the interaction between RIGI and MAVS. In turn, IFN-beta production is impaired. Interacts with host AUP1 which mediates induction of lipophagy in host cells and facilitates production of virus progeny particles. Its function is as follows. Functions as a signal peptide for NS4B and is required for the interferon antagonism activity of the latter. Functionally, induces the formation of ER-derived membrane vesicles where the viral replication takes place. Inhibits interferon (IFN)-induced host STAT1 phosphorylation and nuclear translocation, thereby preventing the establishment of cellular antiviral state by blocking the IFN-alpha/beta pathway. Replicates the viral (+) and (-) RNA genome, and performs the capping of genomes in the cytoplasm. NS5 methylates viral RNA cap at guanine N-7 and ribose 2'-O positions. Besides its role in RNA genome replication, also prevents the establishment of cellular antiviral state by blocking the interferon-alpha/beta (IFN-alpha/beta) signaling pathway. Inhibits host TYK2 and STAT2 phosphorylation, thereby preventing activation of JAK-STAT signaling pathway. May reduce immune responses by preventing the recruitment of the host PAF1 complex to interferon-responsive genes. This Aedes aegypti (Yellowfever mosquito) protein is Genome polyprotein.